A 346-amino-acid polypeptide reads, in one-letter code: Alkanal monooxygenase alpha chain (346 aa).

As to quaternary structure, heterodimer of an alpha and a beta chain.

The enzyme catalyses a long-chain fatty aldehyde + FMNH2 + O2 = a long-chain fatty acid + hnu + FMN + H2O + 2 H(+). Functionally, light-emitting reaction in luminous bacteria. In Photobacterium phosphoreum, this protein is Alkanal monooxygenase alpha chain (luxA).